Here is a 412-residue protein sequence, read N- to C-terminus: uncharacterized protein (412 aa).

The 59-residue stretch at 6 to 64 folds into the TRAM domain; it reads ELAKGDIISVEVLRPAHGGEGIGHHDGRVIFVKGGIPGDVVDVEIAQLKKKWARGEVVK. The S-adenosyl-L-methionine site is built by Q242, Y278, E300, and D341. The active-site Nucleophile is C368.

It belongs to the class I-like SAM-binding methyltransferase superfamily. RNA M5U methyltransferase family.

This is an uncharacterized protein from Corynebacterium glutamicum (strain ATCC 13032 / DSM 20300 / JCM 1318 / BCRC 11384 / CCUG 27702 / LMG 3730 / NBRC 12168 / NCIMB 10025 / NRRL B-2784 / 534).